A 294-amino-acid polypeptide reads, in one-letter code: 33 kDa chaperonin (294 aa).

2 disulfide bridges follow: C230–C232 and C263–C266.

The protein belongs to the HSP33 family. Under oxidizing conditions two disulfide bonds are formed involving the reactive cysteines. Under reducing conditions zinc is bound to the reactive cysteines and the protein is inactive.

The protein resides in the cytoplasm. Redox regulated molecular chaperone. Protects both thermally unfolding and oxidatively damaged proteins from irreversible aggregation. Plays an important role in the bacterial defense system toward oxidative stress. This Chromobacterium violaceum (strain ATCC 12472 / DSM 30191 / JCM 1249 / CCUG 213 / NBRC 12614 / NCIMB 9131 / NCTC 9757 / MK) protein is 33 kDa chaperonin.